The primary structure comprises 132 residues: Protein NrdI (132 aa).

It belongs to the NrdI family.

Functionally, probably involved in ribonucleotide reductase function. This chain is Protein NrdI, found in Staphylococcus aureus (strain Mu3 / ATCC 700698).